Here is a 333-residue protein sequence, read N- to C-terminus: Type II secretion system protein K (333 aa).

The propeptide at 1–7 is leader sequence; that stretch reads MRRGQNG. A helical membrane pass occupies residues 8–29; sequence VALITVLLVVAVVTIVCAGLII. Topologically, residues 30–333 are periplasmic; it reads RQQLAIRSSA…GGDDWKKDER (304 aa). Residues 313-333 are disordered; sequence MGQGGLPIPSTGGDDWKKDER.

Belongs to the GSP K family. In terms of assembly, type II secretion is composed of four main components: the outer membrane complex, the inner membrane complex, the cytoplasmic secretion ATPase and the periplasm-spanning pseudopilus. Interacts with the tip of the type II pseudopilus subunits XcpV, XcpU and XcpW. Interacts with core component XcpT. Post-translationally, cleaved by prepilin peptidase.

Its subcellular location is the cell inner membrane. Functionally, component of the type II secretion system required for the energy-dependent secretion of extracellular factors such as proteases and toxins from the periplasm. Plays a role in pseudopilus assembly and seems to control its length. Interacts with the pseudopilus tip complex that is critical for the recognition and binding of secretion substrates. Type II pseudopilus confers increased bacterial adhesive capabilities. The protein is Type II secretion system protein K (xcpX) of Pseudomonas aeruginosa (strain ATCC 15692 / DSM 22644 / CIP 104116 / JCM 14847 / LMG 12228 / 1C / PRS 101 / PAO1).